Consider the following 615-residue polypeptide: MPDYRSKTSTHGRNMAGARALWRATGMKDEDFKKPIIAIANSFTQFVPGHVHLKDMGQLVAREVERAGGVAKEFNTIAVDDGIAMGHDGMLYSLPSREIIADSVEYMVNAHCADAIVCISNCDKITPGMLMASLRLNIPVIFVSGGPMEAGKTKLASHGLDLVDAMVIAADSTASDEKVAEYERSACPTCGSCSGMFTANSMNCLTEALGLALPGNGSALATHSDREQLFLQAGRTIVDLCRQYYKENDDSVLPRNIANFKAFENAMTLDIAMGGSTNTILHLLAAAQEAEIDFDLRHIDRLSRKVPQLCKVAPNIQKYHMEDVHRAGGIFSILGELARGGLLHTDLPTVHSKTLAEGIAKWDITQTDDEAVHTFFKAGPAGIPTQTAFSQSTRWDSLDDDRENGCIRSVEHAYSQEGGLAVLYGNIALDGCVVKTAGVDESIHVFEGNAKIFESQDSAVRGILADEVKAGDIVIIRYEGPKGGPGMQEMLYPTSYLKSKGLGKDCALLTDGRFSGGTSGLSIGHASPEAAAGGAIGLVRDGDKVLIDIPNRSINLLIDDAEMAERRTEQDKKGWKPVESRPRKVTTALKAYALLATSADKGAVRDKALLDKLVP.

D81 serves as a coordination point for Mg(2+). [2Fe-2S] cluster is bound at residue C122. D123 and K124 together coordinate Mg(2+). An N6-carboxylysine modification is found at K124. A [2Fe-2S] cluster-binding site is contributed by C193. E489 is a Mg(2+) binding site. The Proton acceptor role is filled by S515.

The protein belongs to the IlvD/Edd family. In terms of assembly, homodimer. The cofactor is [2Fe-2S] cluster. Requires Mg(2+) as cofactor.

The catalysed reaction is (2R)-2,3-dihydroxy-3-methylbutanoate = 3-methyl-2-oxobutanoate + H2O. It carries out the reaction (2R,3R)-2,3-dihydroxy-3-methylpentanoate = (S)-3-methyl-2-oxopentanoate + H2O. It functions in the pathway amino-acid biosynthesis; L-isoleucine biosynthesis; L-isoleucine from 2-oxobutanoate: step 3/4. Its pathway is amino-acid biosynthesis; L-valine biosynthesis; L-valine from pyruvate: step 3/4. Functionally, functions in the biosynthesis of branched-chain amino acids. Catalyzes the dehydration of (2R,3R)-2,3-dihydroxy-3-methylpentanoate (2,3-dihydroxy-3-methylvalerate) into 2-oxo-3-methylpentanoate (2-oxo-3-methylvalerate) and of (2R)-2,3-dihydroxy-3-methylbutanoate (2,3-dihydroxyisovalerate) into 2-oxo-3-methylbutanoate (2-oxoisovalerate), the penultimate precursor to L-isoleucine and L-valine, respectively. The protein is Dihydroxy-acid dehydratase of Pseudomonas savastanoi pv. phaseolicola (strain 1448A / Race 6) (Pseudomonas syringae pv. phaseolicola (strain 1448A / Race 6)).